The chain runs to 415 residues: Arrestin red cell isoform 3 (415 aa).

This sequence belongs to the arrestin family.

It is found in the cytoplasm. This Oncorhynchus mykiss (Rainbow trout) protein is Arrestin red cell isoform 3.